The following is a 333-amino-acid chain: MKCGSREVFVKLEEGTNPQWGKPPSSRSAEEHIRYSFLILDKPRGPTSHEVAAWVKKILGVERAGHSGTLDPKVSGVLPVAVAEGTKVLMALSRADKVYIAVAKFHGDVDVENLRRVLQELQGEIYQKPPLRSAVKRQLRTRRVYSLELLELDGRYAVLKMHVEAGTYARKLIHDLGEILGVGANMRELRRVAVSCFTEDEAVTLQDLADAYYIWKKYGDDTYLRRVLLPIEEIARPLPKIWVRDSAVDALCNGAPLAAPGVAKFEHPFSRGDLVAYFTLKGELIGIGRALVDSEEVKKMEKGLVARTDRVVMPRGTYPPMWRRGGKSFKSGT.

The active-site Nucleophile is the Asp-71. One can recognise a PUA domain in the interval 238–313; it reads LPKIWVRDSA…LVARTDRVVM (76 aa).

This sequence belongs to the pseudouridine synthase TruB family. Type 2 subfamily.

It carries out the reaction uridine(55) in tRNA = pseudouridine(55) in tRNA. Functionally, could be responsible for synthesis of pseudouridine from uracil-55 in the psi GC loop of transfer RNAs. The protein is Probable tRNA pseudouridine synthase B of Pyrobaculum calidifontis (strain DSM 21063 / JCM 11548 / VA1).